An 852-amino-acid polypeptide reads, in one-letter code: Envelope glycoprotein gp160 (852 aa).

An N-terminal signal peptide occupies residues 1–32 (MRVKGIKKNYQHLWRWGGMMLLGILMICSATD). Topologically, residues 33-680 (KLWVTVYYGV…ITNWLWYIKI (648 aa)) are extracellular. Asparagine 49 is a glycosylation site (N-linked (GlcNAc...) asparagine; by host). The cysteines at positions 54 and 74 are disulfide-linked. 16 N-linked (GlcNAc...) asparagine; by host glycosylation sites follow: asparagine 88, asparagine 135, asparagine 138, asparagine 154, asparagine 158, asparagine 197, asparagine 234, asparagine 241, asparagine 262, asparagine 276, asparagine 289, asparagine 295, asparagine 301, asparagine 331, asparagine 354, and asparagine 360. 5 cysteine pairs are disulfide-bonded: cysteine 119-cysteine 205, cysteine 126-cysteine 196, cysteine 131-cysteine 155, cysteine 218-cysteine 247, and cysteine 228-cysteine 239. Positions 131-154 (CHDFNATNATSNSGKMMEGGEMKN) are V1. Residues 155–196 (CSFNITTSIRDKMQKEYALFYKLDIVPIDNDKTNTRYRLISC) are V2. Positions 296 to 329 (CTRPNNNTRKRITMGPGRVYYTTGQIIGDIRRAH) are V3. A disulfide bond links cysteine 296 and cysteine 330. The CD4-binding loop stretch occupies residues 362 to 372 (SSGGDPEIVMH). 2 cysteine pairs are disulfide-bonded: cysteine 376–cysteine 439 and cysteine 383–cysteine 412. The tract at residues 383–412 (CNTTQLFNSTWYRNTTGNITEGNSPITLPC) is V4. Residues asparagine 384, asparagine 390, asparagine 396, asparagine 400, asparagine 442, and asparagine 456 are each glycosylated (N-linked (GlcNAc...) asparagine; by host). V5 stretches follow at residues 454–467 (NNNETTDTEIFRPG) and 457–467 (ETTDTEIFRPG). Residues 508 to 528 (AVGLGALFLGFLGAAGSTMGA) are fusion peptide. The immunosuppression stretch occupies residues 570–588 (KQLQARVLAVERYLKDQQL). Cysteine 594 and cysteine 600 are joined by a disulfide. 5 N-linked (GlcNAc...) asparagine; by host glycosylation sites follow: asparagine 607, asparagine 612, asparagine 621, asparagine 633, and asparagine 670. The stretch at 629 to 663 (REIDNYTNLIYSLIEDSQIQQEKNEKELLELDKWA) forms a coiled coil. The interval 658 to 679 (ELDKWASLWNWFNITNWLWYIK) is MPER; binding to GalCer. The helical transmembrane segment at 681–701 (FIMIVGGLIGLRIVFAVLSIV) threads the bilayer. Residues 702 to 852 (NRVRQGYSPL…IRQGLERALQ (151 aa)) are Cytoplasmic-facing. Positions 708-711 (YSPL) match the YXXL motif; contains endocytosis signal motif. A disordered region spans residues 715 to 741 (TRLPGRRGPDRPEGIEEEGGERDRDRS).

The protein belongs to the HIV-1 env protein family. The mature envelope protein (Env) consists of a homotrimer of non-covalently associated gp120-gp41 heterodimers. The resulting complex protrudes from the virus surface as a spike. There seems to be as few as 10 spikes on the average virion. Interacts with host CD4, CCR5 and CXCR4. Gp120 also interacts with the C-type lectins CD209/DC-SIGN and CLEC4M/DC-SIGNR (collectively referred to as DC-SIGN(R)). Gp120 and gp41 interact with GalCer. Gp120 interacts with host ITGA4/ITGB7 complex; on CD4+ T-cells, this interaction results in rapid activation of integrin ITGAL/LFA-1, which facilitates efficient cell-to-cell spreading of HIV-1. Gp120 interacts with cell-associated heparan sulfate; this interaction increases virus infectivity on permissive cells and may be involved in infection of CD4- cells. In terms of assembly, the mature envelope protein (Env) consists of a homotrimer of non-covalently associated gp120-gp41 heterodimers. The resulting complex protrudes from the virus surface as a spike. There seems to be as few as 10 spikes on the average virion. Highly glycosylated by host. The high number of glycan on the protein is reffered to as 'glycan shield' because it contributes to hide protein sequence from adaptive immune system. In terms of processing, palmitoylation of the transmembrane protein and of Env polyprotein (prior to its proteolytic cleavage) is essential for their association with host cell membrane lipid rafts. Palmitoylation is therefore required for envelope trafficking to classical lipid rafts, but not for viral replication. Post-translationally, specific enzymatic cleavages in vivo yield mature proteins. Envelope glycoproteins are synthesized as an inactive precursor that is heavily N-glycosylated and processed likely by host cell furin in the Golgi to yield the mature SU and TM proteins. The cleavage site between SU and TM requires the minimal sequence [KR]-X-[KR]-R. About 2 of the 9 disulfide bonds of gp41 are reduced by P4HB/PDI, following binding to CD4 receptor.

It is found in the virion membrane. The protein resides in the host cell membrane. The protein localises to the host endosome membrane. In terms of biological role, oligomerizes in the host endoplasmic reticulum into predominantly trimers. In a second time, gp160 transits in the host Golgi, where glycosylation is completed. The precursor is then proteolytically cleaved in the trans-Golgi and thereby activated by cellular furin or furin-like proteases to produce gp120 and gp41. Attaches the virus to the host lymphoid cell by binding to the primary receptor CD4. This interaction induces a structural rearrangement creating a high affinity binding site for a chemokine coreceptor like CXCR4 and/or CCR5. Acts as a ligand for CD209/DC-SIGN and CLEC4M/DC-SIGNR, which are respectively found on dendritic cells (DCs), and on endothelial cells of liver sinusoids and lymph node sinuses. These interactions allow capture of viral particles at mucosal surfaces by these cells and subsequent transmission to permissive cells. HIV subverts the migration properties of dendritic cells to gain access to CD4+ T-cells in lymph nodes. Virus transmission to permissive T-cells occurs either in trans (without DCs infection, through viral capture and transmission), or in cis (following DCs productive infection, through the usual CD4-gp120 interaction), thereby inducing a robust infection. In trans infection, bound virions remain infectious over days and it is proposed that they are not degraded, but protected in non-lysosomal acidic organelles within the DCs close to the cell membrane thus contributing to the viral infectious potential during DCs' migration from the periphery to the lymphoid tissues. On arrival at lymphoid tissues, intact virions recycle back to DCs' cell surface allowing virus transmission to CD4+ T-cells. Its function is as follows. Acts as a class I viral fusion protein. Under the current model, the protein has at least 3 conformational states: pre-fusion native state, pre-hairpin intermediate state, and post-fusion hairpin state. During fusion of viral and target intracellular membranes, the coiled coil regions (heptad repeats) assume a trimer-of-hairpins structure, positioning the fusion peptide in close proximity to the C-terminal region of the ectodomain. The formation of this structure appears to drive apposition and subsequent fusion of viral and target cell membranes. Complete fusion occurs in host cell endosomes and is dynamin-dependent, however some lipid transfer might occur at the plasma membrane. The virus undergoes clathrin-dependent internalization long before endosomal fusion, thus minimizing the surface exposure of conserved viral epitopes during fusion and reducing the efficacy of inhibitors targeting these epitopes. Membranes fusion leads to delivery of the nucleocapsid into the cytoplasm. In Human immunodeficiency virus type 1 group M subtype B (isolate BRVA) (HIV-1), this protein is Envelope glycoprotein gp160.